Reading from the N-terminus, the 361-residue chain is Ankyrin repeat domain-containing protein 16 (361 aa).

ANK repeat units lie at residues 36–66 (AGDT…DIEA), 70–99 (DYKR…VVDS), 103–132 (ADWT…NPLL), 136–165 (DGWN…DAWK), 170–200 (IRRT…EPDC), 204–233 (CGVT…ACSS), 238–268 (MGAQ…DVDV), 273–302 (SQLT…DINS), and 306–335 (RNRS…KDSE).

As to quaternary structure, interacts with AARS; the interaction is direct. In terms of tissue distribution, widely expressed in brain (at protein level).

It is found in the cytoplasm. The protein resides in the nucleus. In terms of biological role, required to prevent the misactivation of serine (Ser) with tRNA(Ala) by promoting the hydrolysis of Ser-mischarged tRNA(Ala), thereby playing a role in translational fidelity. Binds directly to the catalytic domain of AARS/AlaRS and captures Ser that is misactivated by AARS/AlaRS, preventing the charging of Ser adenylates to tRNA(Ala) and precluding Ser misincorporation in nascent peptides. The sequence is that of Ankyrin repeat domain-containing protein 16 from Mus musculus (Mouse).